Consider the following 232-residue polypeptide: MKVLILACRVALALAREKEEFKTAGEALESISSSEESITHINKQKIEKFKIEEQQQTEDEQQDKIYTFPQPQSLVYSHTEPIPYPILPQNFLPPLQPAVMVPFLQPKVMDVPKTKETIIPKRKEMPLLQSPVVPFTESQSLTLTDLENLHLPLPLLQSLMYQIPQPVPQTPMIPPQSLLSLSQFKVLPVPQQMVPYPQRAMPVQAVLPFQEPVPDPVRGLHPVPQPLVPVIA.

Positions 1–15 (MKVLILACRVALALA) are cleaved as a signal peptide. A phosphoserine mark is found at serine 30, serine 32, serine 33, and serine 34.

The protein belongs to the beta-casein family. Mammary gland specific. Secreted in milk.

It localises to the secreted. Its function is as follows. Important role in determination of the surface properties of the casein micelles. This Camelus dromedarius (Dromedary) protein is Beta-casein (CSN2).